Reading from the N-terminus, the 414-residue chain is Esterase FrsA (414 aa).

It belongs to the FrsA family.

It catalyses the reaction a carboxylic ester + H2O = an alcohol + a carboxylate + H(+). Catalyzes the hydrolysis of esters. This is Esterase FrsA from Escherichia coli O139:H28 (strain E24377A / ETEC).